The sequence spans 126 residues: Aspartate 1-decarboxylase (126 aa).

Catalysis depends on serine 25, which acts as the Schiff-base intermediate with substrate; via pyruvic acid. Serine 25 carries the pyruvic acid (Ser) modification. Threonine 57 contributes to the substrate binding site. Tyrosine 58 serves as the catalytic Proton donor. Residue 73–75 participates in substrate binding; it reads GGA.

It belongs to the PanD family. Heterooctamer of four alpha and four beta subunits. It depends on pyruvate as a cofactor. In terms of processing, is synthesized initially as an inactive proenzyme, which is activated by self-cleavage at a specific serine bond to produce a beta-subunit with a hydroxyl group at its C-terminus and an alpha-subunit with a pyruvoyl group at its N-terminus.

It localises to the cytoplasm. The enzyme catalyses L-aspartate + H(+) = beta-alanine + CO2. It functions in the pathway cofactor biosynthesis; (R)-pantothenate biosynthesis; beta-alanine from L-aspartate: step 1/1. Its function is as follows. Catalyzes the pyruvoyl-dependent decarboxylation of aspartate to produce beta-alanine. The chain is Aspartate 1-decarboxylase from Acinetobacter baumannii (strain ACICU).